The primary structure comprises 473 residues: ATP synthase subunit beta, chloroplastic (473 aa).

172–179 (GGAGVGKT) contacts ATP.

The protein belongs to the ATPase alpha/beta chains family. In terms of assembly, F-type ATPases have 2 components, CF(1) - the catalytic core - and CF(0) - the membrane proton channel. CF(1) has five subunits: alpha(3), beta(3), gamma(1), delta(1), epsilon(1). CF(0) has four main subunits: a(1), b(1), b'(1) and c(9-12).

It localises to the plastid. The protein localises to the chloroplast thylakoid membrane. It carries out the reaction ATP + H2O + 4 H(+)(in) = ADP + phosphate + 5 H(+)(out). In terms of biological role, produces ATP from ADP in the presence of a proton gradient across the membrane. The catalytic sites are hosted primarily by the beta subunits. This chain is ATP synthase subunit beta, chloroplastic, found in Equisetum arvense (Field horsetail).